Reading from the N-terminus, the 92-residue chain is Large ribosomal subunit protein eL37 (92 aa).

4 residues coordinate Zn(2+): cysteine 19, cysteine 22, cysteine 34, and cysteine 37. The C4-type zinc-finger motif lies at 19-37; it reads CRRCGRSSYHIQKSKCAQC.

This sequence belongs to the eukaryotic ribosomal protein eL37 family. The cofactor is Zn(2+).

Binds to the 23S rRNA. The chain is Large ribosomal subunit protein eL37 (RpL37) from Spodoptera frugiperda (Fall armyworm).